A 287-amino-acid chain; its full sequence is MASLKSIKKRIVSVKNTRQITKAMKMVSAAKLRRAQENVVAARPYAKKLGEVLERLSKSQDVDGSPLMEKRQGGKALLIIVSSDRGLCGGFNANICKAAERFAKERGSEFTELSMMTIGRKGYEFLKNRHKIYKNYANIFGTLNYQTAALIARELIDGYLAEEYDEVYLLFNAFKSVMTQDITLEQLLPVTPEVAAEEEYAPEYIYEPSKAALLDELLPKHIEVQMFKAMLESVASEHGARMTAMDSASKNASEMIGKLTLQYNRARQAAITTELMEIISGSESIKG.

Belongs to the ATPase gamma chain family. As to quaternary structure, F-type ATPases have 2 components, CF(1) - the catalytic core - and CF(0) - the membrane proton channel. CF(1) has five subunits: alpha(3), beta(3), gamma(1), delta(1), epsilon(1). CF(0) has three main subunits: a, b and c.

It localises to the cell inner membrane. Its function is as follows. Produces ATP from ADP in the presence of a proton gradient across the membrane. The gamma chain is believed to be important in regulating ATPase activity and the flow of protons through the CF(0) complex. The chain is ATP synthase gamma chain from Geotalea uraniireducens (strain Rf4) (Geobacter uraniireducens).